A 94-amino-acid chain; its full sequence is Integration host factor subunit beta (94 aa).

This sequence belongs to the bacterial histone-like protein family. In terms of assembly, heterodimer of an alpha and a beta chain.

Functionally, this protein is one of the two subunits of integration host factor, a specific DNA-binding protein that functions in genetic recombination as well as in transcriptional and translational control. This Vibrio campbellii (strain ATCC BAA-1116) protein is Integration host factor subunit beta.